The chain runs to 252 residues: Enolase-phosphatase E1 (252 aa).

Positions 18 and 20 each coordinate Mg(2+). Substrate is bound by residues 149 to 150 (SS) and K184. Mg(2+) is bound at residue D209.

This sequence belongs to the HAD-like hydrolase superfamily. MasA/MtnC family. In terms of assembly, monomer. Mg(2+) serves as cofactor.

The protein localises to the cytoplasm. It localises to the nucleus. The catalysed reaction is 5-methylsulfanyl-2,3-dioxopentyl phosphate + H2O = 1,2-dihydroxy-5-(methylsulfanyl)pent-1-en-3-one + phosphate. The protein operates within amino-acid biosynthesis; L-methionine biosynthesis via salvage pathway; L-methionine from S-methyl-5-thio-alpha-D-ribose 1-phosphate: step 3/6. Its pathway is amino-acid biosynthesis; L-methionine biosynthesis via salvage pathway; L-methionine from S-methyl-5-thio-alpha-D-ribose 1-phosphate: step 4/6. In terms of biological role, bifunctional enzyme that catalyzes the enolization of 2,3-diketo-5-methylthiopentyl-1-phosphate (DK-MTP-1-P) into the intermediate 2-hydroxy-3-keto-5-methylthiopentenyl-1-phosphate (HK-MTPenyl-1-P), which is then dephosphorylated to form the acireductone 1,2-dihydroxy-3-keto-5-methylthiopentene (DHK-MTPene). This chain is Enolase-phosphatase E1, found in Naegleria gruberi (Amoeba).